A 61-amino-acid chain; its full sequence is Small ribosomal subunit protein uS14 (61 aa).

Zn(2+) is bound by residues Cys24, Cys27, Cys40, and Cys43.

The protein belongs to the universal ribosomal protein uS14 family. Zinc-binding uS14 subfamily. In terms of assembly, part of the 30S ribosomal subunit. Contacts proteins S3 and S10. Requires Zn(2+) as cofactor.

Functionally, binds 16S rRNA, required for the assembly of 30S particles and may also be responsible for determining the conformation of the 16S rRNA at the A site. The polypeptide is Small ribosomal subunit protein uS14 (Mesoplasma florum (strain ATCC 33453 / NBRC 100688 / NCTC 11704 / L1) (Acholeplasma florum)).